The chain runs to 563 residues: Chaperonin GroEL 1 (563 aa).

ATP-binding positions include 29–32, 86–90, Gly-413, 476–478, and Asp-492; these read TIGP, DGTTT, and NAA. Positions 520-545 are disordered; that stretch reads DKPEPPSPAGGEGGGDPMGGMGGMGG. The span at 529 to 545 shows a compositional bias: gly residues; that stretch reads GGEGGGDPMGGMGGMGG.

It belongs to the chaperonin (HSP60) family. Forms a cylinder of 14 subunits composed of two heptameric rings stacked back-to-back. Interacts with the co-chaperonin GroES.

The protein resides in the cytoplasm. The enzyme catalyses ATP + H2O + a folded polypeptide = ADP + phosphate + an unfolded polypeptide.. In terms of biological role, together with its co-chaperonin GroES, plays an essential role in assisting protein folding. The GroEL-GroES system forms a nano-cage that allows encapsulation of the non-native substrate proteins and provides a physical environment optimized to promote and accelerate protein folding. The chain is Chaperonin GroEL 1 from Prochlorococcus marinus (strain SARG / CCMP1375 / SS120).